The sequence spans 330 residues: N-acetyl-gamma-glutamyl-phosphate reductase (330 aa).

Residue Cys-155 is part of the active site.

Belongs to the NAGSA dehydrogenase family. Type 1 subfamily.

It is found in the cytoplasm. It catalyses the reaction N-acetyl-L-glutamate 5-semialdehyde + phosphate + NADP(+) = N-acetyl-L-glutamyl 5-phosphate + NADPH + H(+). It functions in the pathway amino-acid biosynthesis; L-arginine biosynthesis; N(2)-acetyl-L-ornithine from L-glutamate: step 3/4. Its function is as follows. Catalyzes the NADPH-dependent reduction of N-acetyl-5-glutamyl phosphate to yield N-acetyl-L-glutamate 5-semialdehyde. This chain is N-acetyl-gamma-glutamyl-phosphate reductase, found in Shewanella halifaxensis (strain HAW-EB4).